The primary structure comprises 304 residues: Killer cell immunoglobulin-like receptor 2DS2 (304 aa).

The first 21 residues, 1–21, serve as a signal peptide directing secretion; sequence MSLMVVSMACVGFFLLQGAWP. The Extracellular portion of the chain corresponds to 22–245; sequence HEGVHRKPSL…SKTGNPRHLH (224 aa). 2 Ig-like C2-type domains span residues 42-107 and 142-205; these read EETV…VTHS and GESV…FRDS. Disulfide bonds link C49/C100 and C149/C198. Residues N84, N178, and N211 are each glycosylated (N-linked (GlcNAc...) asparagine). The disordered stretch occupies residues 220–239; it reads VTGNPSNSWPSPTEPSSKTG. The chain crosses the membrane as a helical span at residues 246 to 265; sequence VLIGTSVVKIPFTILLFFLL. Residues 266–304 lie on the Cytoplasmic side of the membrane; that stretch reads HRWCSNKKNAAVMDQEPAGNRTVNSEDSDEQDHQEVSYA. The interval 280–304 is disordered; that stretch reads QEPAGNRTVNSEDSDEQDHQEVSYA.

Belongs to the immunoglobulin superfamily.

Its subcellular location is the cell membrane. Receptor on natural killer (NK) cells for HLA-C alleles. Does not inhibit the activity of NK cells. The sequence is that of Killer cell immunoglobulin-like receptor 2DS2 from Homo sapiens (Human).